Reading from the N-terminus, the 1690-residue chain is Collagen alpha-4(IV) chain (1690 aa).

The signal sequence occupies residues 1-38 (MWSLHIVLMRCSFRLTKSLATGPWSLILILFSVQYVYG). Residues 39 to 64 (SGKKYIGPCGGRDCSVCHCVPEKGSR) are 7S domain. Disordered stretches follow at residues 61 to 173 (KGSR…GEKG) and 187 to 258 (GDRG…GPTL). The interval 65–1459 (GPPGPPGPQG…IGDPGPKGFG (1395 aa)) is triple-helical region. Pro residues predominate over residues 66–75 (PPGPPGPQGP). The span at 76–88 (IGPLGAPGPIGLS) shows a compositional bias: low complexity. The Cell attachment site motif lies at 94 to 96 (RGD). N-linked (GlcNAc...) asparagine glycosylation occurs at Asn142. The Cell attachment site signature appears at 145–147 (RGD). The span at 149 to 164 (GFPGGRGALGPGGPLG) shows a compositional bias: gly residues. Positions 189–191 (RGD) match the Cell attachment site motif. Residues 199–208 (GSWGAGGPAG) are compositionally biased toward gly residues. The Cell attachment site motif lies at 310 to 312 (RGD). Disordered regions lie at residues 369-390 (PGDP…PGPP), 405-451 (GPPG…GLQG), and 469-1457 (GIKG…GPKG). Positions 412–434 (FPGLPGLPGEAGIPGRPDSAPGK) are enriched in low complexity. Pro residues-rich tracts occupy residues 498–507 (PMGPPGPPGL) and 529–540 (PGPPGAEGPPGL). Over residues 586-607 (HGRDGHAGEKGDPGPPGDHEDA) the composition is skewed to basic and acidic residues. Low complexity predominate over residues 644 to 655 (PGVPGHPGVRGP). The N-linked (GlcNAc...) asparagine glycan is linked to Asn669. Residues 681-690 (FDGPPGPKGF) show a composition bias toward pro residues. 2 short sequence motifs (cell attachment site) span residues 724 to 726 (RGD) and 785 to 787 (RGD). Residues 849-858 (GAPGGKGQPG) are compositionally biased toward gly residues. 2 stretches are compositionally biased toward low complexity: residues 866-880 (AGMK…RPGA) and 907-917 (PRGLPGFPGFP). The short motif at 989-991 (RGD) is the Cell attachment site element. Positions 1023–1032 (PGPPGPPGPP) are enriched in pro residues. Over residues 1108–1117 (PGIQGPRGSP) the composition is skewed to low complexity. Residues 1119 to 1131 (RPGPPGSSGPPGC) are compositionally biased toward pro residues. Residues 1212–1214 (RGD) carry the Cell attachment site motif. Pro residues-rich tracts occupy residues 1220 to 1243 (ISPP…PPGP), 1256 to 1280 (DPGP…PPGL), 1297 to 1309 (PGPP…PGPP), 1338 to 1353 (FPGP…PPGR), and 1443 to 1452 (GPGPPGPIGD). A Collagen IV NC1 domain is found at 1465-1690 (GFLLVLHSQT…SRCQVCVKYS (226 aa)). 6 cysteine pairs are disulfide-bonded: Cys1480–Cys1569, Cys1513–Cys1566, Cys1525–Cys1531, Cys1588–Cys1686, Cys1622–Cys1683, and Cys1634–Cys1641.

Belongs to the type IV collagen family. In terms of assembly, there are six type IV collagen isoforms, alpha 1(IV)-alpha 6(IV), each of which can form a triple helix structure with 2 other chains to generate type IV collagen network. The alpha 3(IV) chain forms a triple helical protomer with alpha 4(IV) and alpha 5(IV); this triple helical structure dimerizes through NC1-NC1 domain interactions such that the alpha 3(IV), alpha 4(IV) and alpha 5(IV) chains of one protomer connect with the alpha 5(IV), alpha 4(IV) and alpha 3(IV) chains of the opposite protomer, respectively. Associates with LAMB2 at the neuromuscular junction and in GBM. Prolines at the third position of the tripeptide repeating unit (G-X-Y) are hydroxylated in some or all of the chains. Post-translationally, type IV collagens contain numerous cysteine residues which are involved in inter- and intramolecular disulfide bonding. 12 of these, located in the NC1 domain, are conserved in all known type IV collagens. In terms of processing, the trimeric structure of the NC1 domains is stabilized by covalent bonds between Lys and Met residues. Expressed in Bruch's membrane, outer plexiform layer, inner nuclear layer, inner plexiform layer, ganglion cell layer, inner limiting membrane and around the blood vessels of the retina (at protein level). Alpha 3 and alpha 4 type IV collagens are colocalized and present in kidney, eye, basement membranes of lens capsule, cochlea, lung, skeletal muscle, aorta, synaptic fibers, fetal kidney and fetal lung. PubMed:8083201 reports similar levels of expression of alpha 3 and alpha 4 type IV collagens in kidney, but PubMed:7523402 reports that in kidney levels of alpha 3 type IV collagen are significantly lower than those of alpha 4 type IV collagen. Highest levels of expression of alpha 4 type IV collagen are detected in kidney, calvaria, neuroretina and cardiac muscle. Lower levels of expression are observed in brain, lung and thymus, and no expression is detected in choroid plexus, liver, adrenal, pancreas, ileum or skin.

It localises to the secreted. Its subcellular location is the extracellular space. It is found in the extracellular matrix. The protein resides in the basement membrane. Type IV collagen is the major structural component of glomerular basement membranes (GBM), forming a 'chicken-wire' meshwork together with laminins, proteoglycans and entactin/nidogen. This chain is Collagen alpha-4(IV) chain (COL4A4), found in Homo sapiens (Human).